A 644-amino-acid chain; its full sequence is Protein cueball (644 aa).

Positions 1 to 26 (MIRIRFGMDVLLVLLLATCLLSPAHG) are cleaved as a signal peptide. Topologically, residues 27–531 (TPLEWDFAVT…VCLTPKVWTS (505 aa)) are extracellular. N-linked (GlcNAc...) asparagine glycosylation is found at Asn82 and Asn108. LDL-receptor class B repeat units follow at residues 121 to 166 (MNLF…DVCR), 167 to 211 (RKLY…DQLS), and 212 to 257 (DRLF…TNDA). Asn175, Asn190, and Asn196 each carry an N-linked (GlcNAc...) asparagine glycan. The N-linked (GlcNAc...) asparagine glycan is linked to Asn313. EGF-like domains follow at residues 398 to 430 (EIRE…FTGE) and 433 to 471 (EVSV…ARCE). 5 disulfides stabilise this stretch: Cys402–Cys411, Cys406–Cys421, Cys437–Cys447, Cys441–Cys459, and Cys461–Cys470. N-linked (GlcNAc...) asparagine glycosylation is found at Asn473 and Asn508. The helical transmembrane segment at 532 to 552 (SVIIILVIGIVSSLLLVAVIV) threads the bilayer. The Cytoplasmic portion of the chain corresponds to 553–644 (HGIRRLYKPK…LIHNMEDDLY (92 aa)).

Belongs to the cueball family.

It localises to the cell membrane. Functionally, has a role in spermatogenesis and oogenesis. The chain is Protein cueball from Drosophila erecta (Fruit fly).